Consider the following 179-residue polypeptide: ATP synthase subunit b (179 aa).

Residues 13 to 33 (IHIDELVFGLIAFAVIFALVY) traverse the membrane as a helical segment.

It belongs to the ATPase B chain family. In terms of assembly, F-type ATPases have 2 components, F(1) - the catalytic core - and F(0) - the membrane proton channel. F(1) has five subunits: alpha(3), beta(3), gamma(1), delta(1), epsilon(1). F(0) has three main subunits: a(1), b(2) and c(10-14). The alpha and beta chains form an alternating ring which encloses part of the gamma chain. F(1) is attached to F(0) by a central stalk formed by the gamma and epsilon chains, while a peripheral stalk is formed by the delta and b chains.

The protein localises to the cell membrane. In terms of biological role, f(1)F(0) ATP synthase produces ATP from ADP in the presence of a proton or sodium gradient. F-type ATPases consist of two structural domains, F(1) containing the extramembraneous catalytic core and F(0) containing the membrane proton channel, linked together by a central stalk and a peripheral stalk. During catalysis, ATP synthesis in the catalytic domain of F(1) is coupled via a rotary mechanism of the central stalk subunits to proton translocation. Functionally, component of the F(0) channel, it forms part of the peripheral stalk, linking F(1) to F(0). This chain is ATP synthase subunit b, found in Thermobifida fusca (strain YX).